The primary structure comprises 693 residues: Pentatricopeptide repeat-containing protein At2g19280 (693 aa).

PPR repeat units follow at residues 200–234, 235–269, 270–304, 305–339, 340–370, 372–406, 407–441, 442–476, 477–511, 512–546, 547–581, 582–616, and 617–651; these read LETVFSILIDCCIRERKVNMALKLTYKVDQFGIFP, SRGVCISLLKEILRVHGLELAREFVEHMLSRGRHL, NAAVLSLFIRKYCSDGYFDKGWELLMGMKHYGIRP, DIVAFTVFIDKLCKAGFLKEATSVLFKLKLFGISQ, DSVSVSSVIDGFCKVGKPEEAIKLIHSFRLR, NIFVYSSFLSNICSTGDMLRASTIFQEIFELGLLP, DCVCYTTMIDGYCNLGRTDKAFQYFGALLKSGNPP, SLTTSTILIGACSRFGSISDAESVFRNMKTEGLKL, DVVTYNNLMHGYGKTHQLNKVFELIDEMRSAGISP, DVATYNILIHSMVVRGYIDEANEIISELIRRGFVP, STLAFTDVIGGFSKRGDFQEAFILWFYMADLRMKP, DVVTCSALLHGYCKAQRMEKAIVLFNKLLDAGLKP, and DVVLYNTLIHGYCSVGDIEKACELIGLMVQRGMLP.

Belongs to the PPR family. P subfamily.

The chain is Pentatricopeptide repeat-containing protein At2g19280 from Arabidopsis thaliana (Mouse-ear cress).